The primary structure comprises 308 residues: Ribosomal RNA large subunit methyltransferase F (308 aa).

Belongs to the methyltransferase superfamily. METTL16/RlmF family.

The protein localises to the cytoplasm. It carries out the reaction adenosine(1618) in 23S rRNA + S-adenosyl-L-methionine = N(6)-methyladenosine(1618) in 23S rRNA + S-adenosyl-L-homocysteine + H(+). In terms of biological role, specifically methylates the adenine in position 1618 of 23S rRNA. In Shigella dysenteriae serotype 1 (strain Sd197), this protein is Ribosomal RNA large subunit methyltransferase F.